The primary structure comprises 396 residues: Elongation factor Tu (396 aa).

The 197-residue stretch at 10 to 206 (KPHVNVGTIG…ALDSFIPEPT (197 aa)) folds into the tr-type G domain. Residues 19 to 26 (GHVDHGKT) form a G1 region. A GTP-binding site is contributed by 19–26 (GHVDHGKT). Residue threonine 26 participates in Mg(2+) binding. The interval 60 to 64 (GITIS) is G2. Positions 81–84 (DCPG) are G3. Residues 81-85 (DCPGH) and 136-139 (NKAD) contribute to the GTP site. Residues 136 to 139 (NKAD) are G4. The segment at 174 to 176 (SAR) is G5.

Belongs to the TRAFAC class translation factor GTPase superfamily. Classic translation factor GTPase family. EF-Tu/EF-1A subfamily. As to quaternary structure, monomer.

It is found in the cytoplasm. The catalysed reaction is GTP + H2O = GDP + phosphate + H(+). GTP hydrolase that promotes the GTP-dependent binding of aminoacyl-tRNA to the A-site of ribosomes during protein biosynthesis. The chain is Elongation factor Tu from Xanthomonas euvesicatoria pv. vesicatoria (strain 85-10) (Xanthomonas campestris pv. vesicatoria).